A 67-amino-acid chain; its full sequence is uncharacterized protein (67 aa).

2 helical membrane-spanning segments follow: residues 10–30 and 40–60; these read EFFI…ITMW and LMVG…WMVF.

This sequence belongs to the plectrovirus ORF10 family.

The protein localises to the host membrane. This is an uncharacterized protein from Spiroplasma citri (SpV1).